Here is a 122-residue protein sequence, read N- to C-terminus: Histone H2B.1 (122 aa).

The segment covering 1–10 (MAPKKAPAAA) has biased composition (low complexity). The tract at residues 1 to 28 (MAPKKAPAAAAEKKVKKAPTTEKKNKKK) is disordered. Ala-2 carries the post-translational modification N,N,N-trimethylalanine. Residues Lys-5 and Lys-42 each carry the N6-acetyllysine modification. Lys-116 participates in a covalent cross-link: Glycyl lysine isopeptide (Lys-Gly) (interchain with G-Cter in ubiquitin).

This sequence belongs to the histone H2B family. The nucleosome is a histone octamer containing two molecules each of H2A, H2B, H3 and H4 assembled in one H3-H4 heterotetramer and two H2A-H2B heterodimers. The octamer wraps approximately 147 bp of DNA. In terms of processing, acetylation occurs almost exclusively in the MAC. Post-translationally, monoubiquitination to form H2BK115ub1 gives a specific tag for epigenetic transcriptional activation and is also prerequisite for H3K4me and H3K79me formation.

It localises to the nucleus. The protein localises to the chromosome. Core component of nucleosome. Nucleosomes wrap and compact DNA into chromatin, limiting DNA accessibility to the cellular machineries which require DNA as a template. Histones thereby play a central role in transcription regulation, DNA repair, DNA replication and chromosomal stability. DNA accessibility is regulated via a complex set of post-translational modifications of histones, also called histone code, and nucleosome remodeling. This is Histone H2B.1 (HTB1) from Tetrahymena thermophila (strain SB210).